The sequence spans 321 residues: Tetraacyldisaccharide 4'-kinase (321 aa).

Residue 54–61 coordinates ATP; it reads SVGGTGKT.

Belongs to the LpxK family.

The catalysed reaction is a lipid A disaccharide + ATP = a lipid IVA + ADP + H(+). It participates in glycolipid biosynthesis; lipid IV(A) biosynthesis; lipid IV(A) from (3R)-3-hydroxytetradecanoyl-[acyl-carrier-protein] and UDP-N-acetyl-alpha-D-glucosamine: step 6/6. Its function is as follows. Transfers the gamma-phosphate of ATP to the 4'-position of a tetraacyldisaccharide 1-phosphate intermediate (termed DS-1-P) to form tetraacyldisaccharide 1,4'-bis-phosphate (lipid IVA). The protein is Tetraacyldisaccharide 4'-kinase of Rickettsia typhi (strain ATCC VR-144 / Wilmington).